We begin with the raw amino-acid sequence, 605 residues long: SET domain-containing protein SNOG_11806 (605 aa).

The segment at threonine 68–valine 132 is disordered. The span at lysine 75–valine 89 shows a compositional bias: polar residues. The span at glutamate 104–aspartate 115 shows a compositional bias: acidic residues. Positions proline 473 to glycine 579 constitute an SET domain.

This sequence belongs to the class V-like SAM-binding methyltransferase superfamily.

The sequence is that of SET domain-containing protein SNOG_11806 from Phaeosphaeria nodorum (strain SN15 / ATCC MYA-4574 / FGSC 10173) (Glume blotch fungus).